Reading from the N-terminus, the 478-residue chain is NAD-dependent malic enzyme (478 aa).

The ACT domain maps to 12–86; the sequence is TIRLQFEKDI…GVKIVNVSDR (75 aa). Y114 functions as the Proton donor in the catalytic mechanism. K169 functions as the Proton acceptor in the catalytic mechanism. 3 residues coordinate a divalent metal cation: E211, D212, and D237. NAD(+)-binding positions include 270 to 273, N363, and N393; that span reads IGAA.

The protein belongs to the malic enzymes family. In terms of assembly, homotetramer. Requires Mg(2+) as cofactor. It depends on Mn(2+) as a cofactor.

The enzyme catalyses (S)-malate + NAD(+) = pyruvate + CO2 + NADH. It carries out the reaction oxaloacetate + H(+) = pyruvate + CO2. Its activity is regulated as follows. The activity is enhanced 5-7 times by ammonium and potassium. In addition to the NAD-dependent oxidative decarboxylation of L-malate, the enzyme catalyzes the decarboxylation of oxaloacetate. This Geobacillus stearothermophilus (Bacillus stearothermophilus) protein is NAD-dependent malic enzyme.